We begin with the raw amino-acid sequence, 327 residues long: Probable cell division protein WhiA (327 aa).

A DNA-binding region (H-T-H motif) is located at residues 275 to 308 (SLEELGRLADPPMTKDAVAGRIRRLLSMADRKAK).

It belongs to the WhiA family.

In terms of biological role, involved in cell division and chromosome segregation. This Mycobacterium bovis (strain ATCC BAA-935 / AF2122/97) protein is Probable cell division protein WhiA.